Consider the following 232-residue polypeptide: Orotidine 5'-phosphate decarboxylase (232 aa).

Residues Asp-13, Lys-35, 62–71 (DLKFHDIPNT), Thr-122, Arg-182, Gln-191, Gly-211, and Arg-212 each bind substrate. The Proton donor role is filled by Lys-64.

It belongs to the OMP decarboxylase family. Type 1 subfamily. As to quaternary structure, homodimer.

The catalysed reaction is orotidine 5'-phosphate + H(+) = UMP + CO2. It participates in pyrimidine metabolism; UMP biosynthesis via de novo pathway; UMP from orotate: step 2/2. Functionally, catalyzes the decarboxylation of orotidine 5'-monophosphate (OMP) to uridine 5'-monophosphate (UMP). This chain is Orotidine 5'-phosphate decarboxylase, found in Pseudomonas fluorescens (strain SBW25).